We begin with the raw amino-acid sequence, 626 residues long: Basic helix-loop-helix ARNT-like protein 1 (626 aa).

The segment at 1-60 (MADQRMDISSTISDFMSPGPTDLLSSSLGTSGVDCNRKRKGSSTDYQESMDTDKDDPHGR) is disordered. Ser-17 is subject to Phosphoserine; by GSK3-beta. The segment covering 17–32 (SPGPTDLLSSSLGTSG) has biased composition (low complexity). Thr-21 is modified (phosphothreonine; by GSK3-beta). Residues 36-41 (NRKRKG) carry the Nuclear localization signal motif. Residues 51–60 (DTDKDDPHGR) are compositionally biased toward basic and acidic residues. The 54-residue stretch at 72–125 (NAREAHSQIEKRRRDKMNSFIDELASLVPTCNAMSRKLDKLTVLRMAVQHMKTL) folds into the bHLH domain. Position 78 is a phosphoserine (Ser-78). The residue at position 90 (Ser-90) is a Phosphoserine; by CK2. Positions 142–152 (LSDDELKHLIL) match the Nuclear export signal 1 motif. Residues 143 to 215 (SDDELKHLIL…EQLSSSDTAP (73 aa)) enclose the PAS 1 domain. A Glycyl lysine isopeptide (Lys-Gly) (interchain with G-Cter in SUMO2 and SUMO3) cross-link involves residue Lys-252. Lys-259 participates in a covalent cross-link: Glycyl lysine isopeptide (Lys-Gly) (interchain with G-Cter in SUMO2). The PAS 2 domain occupies 326–396 (PQPVNGEIRV…ECHRQVLQTR (71 aa)). The short motif at 361 to 369 (LAYLPQELL) is the Nuclear export signal 2 element. The 44-residue stretch at 401 to 444 (TNCYKFKIKDGSFITLRSRWFSFMNPWTKEVEYIVSTNTVVLAN) folds into the PAC domain. 2 disordered regions span residues 458 to 493 (ASPH…AGAG) and 511 to 595 (GSSP…SPSN). Residues 484–493 (IPGGTRAGAG) show a composition bias toward gly residues. Residues 508 to 588 (RIRGSSPSSC…IGIDMIDNDQ (81 aa)) form an interaction with CIART region. Over residues 511–521 (GSSPSSCGSSP) the composition is skewed to low complexity. Residue Lys-538 is modified to N6-acetyllysine.

Component of the circadian clock oscillator which includes the CRY1/2 proteins, CLOCK or NPAS2,BMAL1 or BMAL2, CSNK1D and/or CSNK1E, TIMELESS and the PER1/2/3 proteins. Forms a heterodimer with CLOCK. The CLOCK-BMAL1 heterodimer is required for E-box-dependent transactivation, for CLOCK nuclear translocation and degradation, and, for phosphorylation of both CLOCK and BMAL1. Part of a nuclear complex which also includes RACK1 and PRKCA; RACK1 and PRKCA are recruited to the complex in a circadian manner. Interacts with NPAS2. Interacts with EZH2. Interacts with SUMO3. Interacts with SIRT1. Interacts with AHR. Interacts with ID1, ID2 and ID3. Interacts with DDX4. Interacts with OGT. Interacts with EED and SUZ12. Interacts with MTA1. Interacts with CIART. Interacts with HSP90. Interacts with KAT2B and EP300. Interacts with BHLHE40/DEC1 and BHLHE41/DEC2. Interacts with RELB and the interaction is enhanced in the presence of CLOCK. Interacts with PER1, PER2, CRY1 and CRY2 and this interaction requires a translocation to the nucleus. Interaction of the CLOCK-BMAL1 heterodimer with PER or CRY inhibits transcription activation. Interaction of the CLOCK-BMAL1 with CRY1 is independent of DNA but with PER2 is off DNA. The CLOCK-BMAL1 heterodimer interacts with GSK3B. Interacts with KDM5A. Interacts with KMT2A; in a circadian manner. Interacts with UBE3A. Interacts with PRKCG. Interacts with MAGEL2. Interacts with NCOA2. Interacts with THRAP3. The CLOCK-BMAL1 heterodimer interacts with PASD1. Interacts with PASD1. Interacts with USP9X. Interacts with PIWIL2 (via PIWI domain). Interacts with HDAC3. Interacts with HNF4A. Post-translationally, ubiquitinated, leading to its proteasomal degradation. Deubiquitinated by USP9X. O-glycosylated; contains O-GlcNAc. O-glycosylation by OGT prevents protein degradation by inhibiting ubiquitination. It also stabilizes the CLOCK-BMAL1 heterodimer thereby increasing CLOCK-BMAL1-mediated transcription of genes in the negative loop of the circadian clock such as PER1/2/3 and CRY1/2. In terms of processing, acetylated on Lys-538 by CLOCK during the repression phase of the circadian cycle. Acetylation facilitates recruitment of CRY1 protein and initiates the repression phase of the circadian cycle. Acetylated at Lys-538 by KAT5 during the activation phase of the cycle, leading to recruitment of the positive transcription elongation factor b (P-TEFb) and BRD4, followed by productive elongation of circadian transcripts. Deacetylated by SIRT1, which may result in decreased protein stability. Post-translationally, phosphorylated upon dimerization with CLOCK. Phosphorylation enhances the transcriptional activity, alters the subcellular localization and decreases the stability of the CLOCK-BMAL1 heterodimer by promoting its degradation. Phosphorylation shows circadian variations in the liver with a peak between CT10 to CT14. Phosphorylation at Ser-90 by CK2 is essential for its nuclear localization, its interaction with CLOCK and controls CLOCK nuclear entry. Dephosphorylation at Ser-78 is important for dimerization with CLOCK and transcriptional activity. Sumoylated on Lys-259 upon dimerization with CLOCK. Predominantly conjugated to poly-SUMO2/3 rather than SUMO1 and the level of these conjugates undergo rhythmic variation, peaking at CT9-CT12. Sumoylation localizes it exclusively to the PML body and promotes its ubiquitination in the PML body, ubiquitin-dependent proteasomal degradation and the transcriptional activity of the CLOCK-BMAL1 heterodimer. In terms of processing, undergoes lysosome-mediated degradation in a time-dependent manner in the liver. Hair follicles (at protein level). Highly expressed in the adult brain, skeletal muscle and heart.

Its subcellular location is the nucleus. The protein resides in the cytoplasm. It localises to the PML body. With respect to regulation, there is conflicting data about the effect of NAD cofactors on activity. PubMed:11441146 suggests that the redox state of the cell can modulate the transcriptional activity of the CLOCK-BMAL1 heterodimer; NADH and NADPH enhance the DNA-binding activity of the heterodimer. PubMed:23229515 reports that NADH and NADPH have no significant effect on DNA-binding activity of the CLOCK-BMAL1 heterodimer. Transcriptional activator which forms a core component of the circadian clock. The circadian clock, an internal time-keeping system, regulates various physiological processes through the generation of approximately 24 hour circadian rhythms in gene expression, which are translated into rhythms in metabolism and behavior. It is derived from the Latin roots 'circa' (about) and 'diem' (day) and acts as an important regulator of a wide array of physiological functions including metabolism, sleep, body temperature, blood pressure, endocrine, immune, cardiovascular, and renal function. Consists of two major components: the central clock, residing in the suprachiasmatic nucleus (SCN) of the brain, and the peripheral clocks that are present in nearly every tissue and organ system. Both the central and peripheral clocks can be reset by environmental cues, also known as Zeitgebers (German for 'timegivers'). The predominant Zeitgeber for the central clock is light, which is sensed by retina and signals directly to the SCN. The central clock entrains the peripheral clocks through neuronal and hormonal signals, body temperature and feeding-related cues, aligning all clocks with the external light/dark cycle. Circadian rhythms allow an organism to achieve temporal homeostasis with its environment at the molecular level by regulating gene expression to create a peak of protein expression once every 24 hours to control when a particular physiological process is most active with respect to the solar day. Transcription and translation of core clock components (CLOCK, NPAS2, BMAL1, BMAL2, PER1, PER2, PER3, CRY1 and CRY2) plays a critical role in rhythm generation, whereas delays imposed by post-translational modifications (PTMs) are important for determining the period (tau) of the rhythms (tau refers to the period of a rhythm and is the length, in time, of one complete cycle). A diurnal rhythm is synchronized with the day/night cycle, while the ultradian and infradian rhythms have a period shorter and longer than 24 hours, respectively. Disruptions in the circadian rhythms contribute to the pathology of cardiovascular diseases, cancer, metabolic syndromes and aging. A transcription/translation feedback loop (TTFL) forms the core of the molecular circadian clock mechanism. Transcription factors, CLOCK or NPAS2 and BMAL1 or BMAL2, form the positive limb of the feedback loop, act in the form of a heterodimer and activate the transcription of core clock genes and clock-controlled genes (involved in key metabolic processes), harboring E-box elements (5'-CACGTG-3') within their promoters. The core clock genes: PER1/2/3 and CRY1/2 which are transcriptional repressors form the negative limb of the feedback loop and interact with the CLOCK|NPAS2-BMAL1|BMAL2 heterodimer inhibiting its activity and thereby negatively regulating their own expression. This heterodimer also activates nuclear receptors NR1D1/2 and RORA/B/G, which form a second feedback loop and which activate and repress BMAL1 transcription, respectively. BMAL1 positively regulates myogenesis and negatively regulates adipogenesis via the transcriptional control of the genes of the canonical Wnt signaling pathway. Plays a role in normal pancreatic beta-cell function; regulates glucose-stimulated insulin secretion via the regulation of antioxidant genes NFE2L2/NRF2 and its targets SESN2, PRDX3, CCLC and CCLM. Negatively regulates the mTORC1 signaling pathway; regulates the expression of MTOR and DEPTOR. Controls diurnal oscillations of Ly6C inflammatory monocytes; rhythmic recruitment of the PRC2 complex imparts diurnal variation to chemokine expression that is necessary to sustain Ly6C monocyte rhythms. Regulates the expression of HSD3B2, STAR, PTGS2, CYP11A1, CYP19A1 and LHCGR in the ovary and also the genes involved in hair growth. Plays an important role in adult hippocampal neurogenesis by regulating the timely entry of neural stem/progenitor cells (NSPCs) into the cell cycle and the number of cell divisions that take place prior to cell-cycle exit. Regulates the circadian expression of CIART and KLF11. The CLOCK-BMAL1 heterodimer regulates the circadian expression of SERPINE1/PAI1, VWF, B3, CCRN4L/NOC, NAMPT, DBP, MYOD1, PPARGC1A, PPARGC1B, SIRT1, GYS2, F7, NGFR, GNRHR, BHLHE40/DEC1, ATF4, MTA1, KLF10 and also genes implicated in glucose and lipid metabolism. Promotes rhythmic chromatin opening, regulating the DNA accessibility of other transcription factors. The NPAS2-BMAL1 heterodimer positively regulates the expression of MAOA, F7 and LDHA and modulates the circadian rhythm of daytime contrast sensitivity by regulating the rhythmic expression of adenylate cyclase type 1 (ADCY1) in the retina. The preferred binding motif for the CLOCK-BMAL1 heterodimer is 5'-CACGTGA-3', which contains a flanking adenine nucleotide at the 3-prime end of the canonical 6-nucleotide E-box sequence. CLOCK specifically binds to the half-site 5'-CAC-3', while BMAL1 binds to the half-site 5'-GTGA-3'. The CLOCK-BMAL1 heterodimer also recognizes the non-canonical E-box motifs 5'-AACGTGA-3' and 5'-CATGTGA-3'. Essential for the rhythmic interaction of CLOCK with ASS1 and plays a critical role in positively regulating CLOCK-mediated acetylation of ASS1. Plays a role in protecting against lethal sepsis by limiting the expression of immune checkpoint protein CD274 in macrophages in a PKM2-dependent manner. Regulates the diurnal rhythms of skeletal muscle metabolism via transcriptional activation of genes promoting triglyceride synthesis (DGAT2) and metabolic efficiency (COQ10B). In terms of biological role, (Microbial infection) Regulates SARS coronavirus-2/SARS-CoV-2 entry and replication in lung epithelial cells probably through the post-transcriptional regulation of ACE2 and interferon-stimulated gene expression. This Homo sapiens (Human) protein is Basic helix-loop-helix ARNT-like protein 1.